The following is a 433-amino-acid chain: Tol-Pal system protein TolB (433 aa).

The first 21 residues, 1–21, serve as a signal peptide directing secretion; sequence MRNLLRGMLVVICCMAGIAAA.

It belongs to the TolB family. As to quaternary structure, the Tol-Pal system is composed of five core proteins: the inner membrane proteins TolA, TolQ and TolR, the periplasmic protein TolB and the outer membrane protein Pal. They form a network linking the inner and outer membranes and the peptidoglycan layer.

It is found in the periplasm. Part of the Tol-Pal system, which plays a role in outer membrane invagination during cell division and is important for maintaining outer membrane integrity. The polypeptide is Tol-Pal system protein TolB (Pseudomonas fluorescens (strain ATCC BAA-477 / NRRL B-23932 / Pf-5)).